Here is a 478-residue protein sequence, read N- to C-terminus: ATP synthase subunit beta (478 aa).

163 to 170 is an ATP binding site; it reads GGAGVGKT.

It belongs to the ATPase alpha/beta chains family. As to quaternary structure, F-type ATPases have 2 components, CF(1) - the catalytic core - and CF(0) - the membrane proton channel. CF(1) has five subunits: alpha(3), beta(3), gamma(1), delta(1), epsilon(1). CF(0) has three main subunits: a(1), b(2) and c(9-12). The alpha and beta chains form an alternating ring which encloses part of the gamma chain. CF(1) is attached to CF(0) by a central stalk formed by the gamma and epsilon chains, while a peripheral stalk is formed by the delta and b chains.

Its subcellular location is the cell inner membrane. The enzyme catalyses ATP + H2O + 4 H(+)(in) = ADP + phosphate + 5 H(+)(out). Functionally, produces ATP from ADP in the presence of a proton gradient across the membrane. The catalytic sites are hosted primarily by the beta subunits. This is ATP synthase subunit beta from Aquifex pyrophilus.